A 1203-amino-acid polypeptide reads, in one-letter code: Probable phospholipid-transporting ATPase 11 (1203 aa).

Topologically, residues 1–71 are cytoplasmic; it reads MTKCRRRRLH…STKYTLASFI (71 aa). The helical transmembrane segment at 72 to 93 threads the bilayer; it reads PKSLFEQFRRVANFYFLVTGVL. The Extracellular portion of the chain corresponds to 94-97; that stretch reads SLTA. The helical transmembrane segment at 98–120 threads the bilayer; that stretch reads LSPYSPISALLPLTFVIAASMVK. At 121–303 the chain is on the cytoplasmic side; sequence EAIEDWGRKK…SRIERKMDKI (183 aa). A helical transmembrane segment spans residues 304 to 325; it reads IYLMFGVVFLMSFIGSIVFGIE. The Extracellular segment spans residues 326 to 363; that stretch reads TREDRVRNGGRTERWYLRPDNADIFFDPDRAPMAAVYH. The chain crosses the membrane as a helical span at residues 364 to 381; it reads FFTAVMLYSYFIPISLYV. Over 382 to 921 the chain is Cytoplasmic; the sequence is SIEIVKVLQS…HGHWCYSRIS (540 aa). Asp429 acts as the 4-aspartylphosphate intermediate in catalysis. 2 residues coordinate Mg(2+): Asp866 and Asp870. The chain crosses the membrane as a helical span at residues 922-941; it reads SMICYFFYKNITFGVTVFLY. The Extracellular portion of the chain corresponds to 942–955; sequence EAYTSFSAQPAYND. The chain crosses the membrane as a helical span at residues 956–975; the sequence is WFLSLFNVFFSSLPVIALGV. Over 976–1005 the chain is Cytoplasmic; that stretch reads FDQDVSARYCYKFPLLYQEGVQNLLFSWKR. A helical transmembrane segment spans residues 1006-1028; the sequence is IIGWMFNGVFTALAIFFLCKESL. The Extracellular segment spans residues 1029–1041; it reads KHQLYNPNGKTAG. A helical transmembrane segment spans residues 1042 to 1064; sequence REILGGTMYTCVVWVVNLQMALA. At 1065–1070 the chain is on the cytoplasmic side; that stretch reads ISYFTW. Residues 1071–1091 form a helical membrane-spanning segment; it reads LQHIVIWGSVAFWYIFLMIYG. Over 1092-1108 the chain is Extracellular; that stretch reads AITPSFSTDAYKVFIEA. Residues 1109-1133 traverse the membrane as a helical segment; sequence LAPAPSYWLTTLFVMFFALIPFFVF. Topologically, residues 1134–1203 are cytoplasmic; sequence KSVQMRFFPG…DQLNKNFIAF (70 aa).

This sequence belongs to the cation transport ATPase (P-type) (TC 3.A.3) family. Type IV subfamily.

The protein resides in the membrane. It catalyses the reaction ATP + H2O + phospholipidSide 1 = ADP + phosphate + phospholipidSide 2.. In terms of biological role, involved in transport of phospholipids. The chain is Probable phospholipid-transporting ATPase 11 from Arabidopsis thaliana (Mouse-ear cress).